The following is a 331-amino-acid chain: Tyrosine--tRNA ligase (331 aa).

L-tyrosine is bound by residues Y31, Y155, Q159, D162, and Q177. The 'KMSKS' region motif lies at 218 to 222 (KMSKS). K221 provides a ligand contact to ATP.

This sequence belongs to the class-I aminoacyl-tRNA synthetase family. TyrS type 4 subfamily. In terms of assembly, homodimer.

It localises to the cytoplasm. It catalyses the reaction tRNA(Tyr) + L-tyrosine + ATP = L-tyrosyl-tRNA(Tyr) + AMP + diphosphate + H(+). Its function is as follows. Catalyzes the attachment of tyrosine to tRNA(Tyr) in a two-step reaction: tyrosine is first activated by ATP to form Tyr-AMP and then transferred to the acceptor end of tRNA(Tyr). The polypeptide is Tyrosine--tRNA ligase (Thermoplasma volcanium (strain ATCC 51530 / DSM 4299 / JCM 9571 / NBRC 15438 / GSS1)).